Here is a 266-residue protein sequence, read N- to C-terminus: U2 small nuclear ribonucleoprotein A' (266 aa).

4 LRR repeats span residues 30-51 (ILRN…NHLA), 53-74 (PTHI…HHRD), 75-95 (DIET…ALLP), and 97-118 (KLKS…IPLS). The region spanning 132–170 (NPICHLSEYRQRILALVPSLEVLDFKLVSQAEKAQAVKD) is the LRRCT domain.

Belongs to the U2 small nuclear ribonucleoprotein A family. Associated with the spliceosome.

The protein localises to the nucleus. Involved in pre-mRNA splicing. This Candida glabrata (strain ATCC 2001 / BCRC 20586 / JCM 3761 / NBRC 0622 / NRRL Y-65 / CBS 138) (Yeast) protein is U2 small nuclear ribonucleoprotein A' (LEA1).